The chain runs to 141 residues: Nucleoside diphosphate kinase (141 aa).

Residues lysine 11, phenylalanine 59, arginine 87, threonine 93, arginine 104, and asparagine 114 each coordinate ATP. Histidine 117 acts as the Pros-phosphohistidine intermediate in catalysis.

This sequence belongs to the NDK family. As to quaternary structure, homotetramer. It depends on Mg(2+) as a cofactor.

It localises to the cytoplasm. It carries out the reaction a 2'-deoxyribonucleoside 5'-diphosphate + ATP = a 2'-deoxyribonucleoside 5'-triphosphate + ADP. It catalyses the reaction a ribonucleoside 5'-diphosphate + ATP = a ribonucleoside 5'-triphosphate + ADP. Major role in the synthesis of nucleoside triphosphates other than ATP. The ATP gamma phosphate is transferred to the NDP beta phosphate via a ping-pong mechanism, using a phosphorylated active-site intermediate. This chain is Nucleoside diphosphate kinase, found in Vibrio parahaemolyticus serotype O3:K6 (strain RIMD 2210633).